The chain runs to 64 residues: Ferredoxin-2 (64 aa).

4Fe-4S ferredoxin-type domains lie at 3-31 (KYLYLDQDECMACESCVELCPEAFRMSSA) and 34-64 (YAEVIDPNTTAECVEDAISTCPVECIEWREE). [4Fe-4S] cluster is bound by residues Cys-12, Cys-15, Cys-18, and Cys-54.

As to quaternary structure, homodimer. The cofactor is [4Fe-4S] cluster.

Its function is as follows. Ferredoxins are iron-sulfur proteins that transfer electrons in a wide variety of metabolic reactions. The protein is Ferredoxin-2 of Nitratidesulfovibrio vulgaris (strain DSM 19637 / Miyazaki F) (Desulfovibrio vulgaris).